Here is an 893-residue protein sequence, read N- to C-terminus: UPF0182 protein CLM_0018 (893 aa).

7 consecutive transmembrane segments (helical) span residues isoleucine 9 to isoleucine 29, alanine 49 to tyrosine 69, leucine 94 to tyrosine 114, valine 154 to glutamate 174, leucine 202 to tryptophan 222, phenylalanine 246 to valine 266, and valine 273 to leucine 293.

Belongs to the UPF0182 family.

The protein resides in the cell membrane. In Clostridium botulinum (strain Kyoto / Type A2), this protein is UPF0182 protein CLM_0018.